Consider the following 980-residue polypeptide: Probable outer membrane protein PmpH (980 aa).

An N-terminal signal peptide occupies residues 1–24 (MPFSLRSTSFCFLACLCSYSYGLA). Residues 661–980 (GELVPNSLWV…FVSLGLNRIF (320 aa)) enclose the Autotransporter domain.

Belongs to the PMP outer membrane protein family.

The protein localises to the secreted. It localises to the cell wall. Its subcellular location is the cell outer membrane. The sequence is that of Probable outer membrane protein PmpH (pmpH) from Chlamydia muridarum (strain MoPn / Nigg).